The sequence spans 327 residues: Ribose 1,5-bisphosphate isomerase (327 aa).

Substrate-binding positions include 25–28 and arginine 68; that span reads RGAA. Catalysis depends on cysteine 133, which acts as the Proton acceptor. Aspartate 202 functions as the Proton donor in the catalytic mechanism. Substrate contacts are provided by residues 212–213 and lysine 238; that span reads NK.

This sequence belongs to the eIF-2B alpha/beta/delta subunits family. R15P isomerase subfamily.

The enzyme catalyses alpha-D-ribose 1,5-bisphosphate = D-ribulose 1,5-bisphosphate. Functionally, isomerase involved in the non-carboxylating pentose bisphosphate pathway, a nucleoside degradation pathway present in some halophilic archaea. Catalyzes the isomerization of ribose 1,5-bisphosphate (R15P) to ribulose 1,5-bisphosphate (RuBP). This chain is Ribose 1,5-bisphosphate isomerase, found in Haloterrigena turkmenica (strain ATCC 51198 / DSM 5511 / JCM 9101 / NCIMB 13204 / VKM B-1734 / 4k) (Halococcus turkmenicus).